The chain runs to 80 residues: Small ribosomal subunit protein bS18 (80 aa).

The protein belongs to the bacterial ribosomal protein bS18 family. In terms of assembly, part of the 30S ribosomal subunit. Forms a tight heterodimer with protein bS6.

Functionally, binds as a heterodimer with protein bS6 to the central domain of the 16S rRNA, where it helps stabilize the platform of the 30S subunit. The sequence is that of Small ribosomal subunit protein bS18 from Methylocella silvestris (strain DSM 15510 / CIP 108128 / LMG 27833 / NCIMB 13906 / BL2).